The chain runs to 354 residues: NADH-quinone oxidoreductase subunit H (354 aa).

8 helical membrane-spanning segments follow: residues 22–42 (ILIR…YLIL), 91–111 (YLIA…VIPF), 124–144 (LLYV…AGWA), 168–188 (MGFA…SAIV), 203–223 (ILSW…ISGV), 255–275 (LFFL…ALMF), 291–311 (IPGF…FIWI), and 326–346 (LGWK…AIWI).

Belongs to the complex I subunit 1 family. In terms of assembly, NDH-1 is composed of 14 different subunits. Subunits NuoA, H, J, K, L, M, N constitute the membrane sector of the complex.

Its subcellular location is the cell inner membrane. The catalysed reaction is a quinone + NADH + 5 H(+)(in) = a quinol + NAD(+) + 4 H(+)(out). In terms of biological role, NDH-1 shuttles electrons from NADH, via FMN and iron-sulfur (Fe-S) centers, to quinones in the respiratory chain. The immediate electron acceptor for the enzyme in this species is believed to be ubiquinone. Couples the redox reaction to proton translocation (for every two electrons transferred, four hydrogen ions are translocated across the cytoplasmic membrane), and thus conserves the redox energy in a proton gradient. This subunit may bind ubiquinone. This is NADH-quinone oxidoreductase subunit H from Cupriavidus necator (strain ATCC 17699 / DSM 428 / KCTC 22496 / NCIMB 10442 / H16 / Stanier 337) (Ralstonia eutropha).